A 359-amino-acid polypeptide reads, in one-letter code: Cytochrome c oxidase subunit 2 (359 aa).

The first 28 residues, 1–28 (MEQQNKRGLKRKALLGGVLGLGGLAMAG), serve as a signal peptide directing secretion. C29 carries the S-diacylglycerol cysteine lipid modification. 2 helical membrane passes run 64 to 84 (VWVAAWIIGIIMWGLFLTAIF) and 107 to 127 (VPLELVLTIVPIIIVMVLFFF). The segment at 168-203 (PGGQDYQGSDPERQAAAEASKKDPSGDNPIHGNSKS) is disordered. The segment covering 177 to 192 (DPERQAAAEASKKDPS) has biased composition (basic and acidic residues). Positions 244, 285, 287, 289, 293, and 296 each coordinate Cu cation. The interval 335-359 (YATSTSPFVSDRTATRDGENTQSNA) is disordered.

As to quaternary structure, associates with subunits I, III and IV to form cytochrome c oxidase. The 4 subunit cytochrome c oxidase forms a supercomplex with the menaquinol-cytochrome c reductase complex (cytochrome bc1). Binuclear copper center (CuA) serves as cofactor.

Its subcellular location is the cell membrane. It catalyses the reaction 4 Fe(II)-[cytochrome c] + O2 + 8 H(+)(in) = 4 Fe(III)-[cytochrome c] + 2 H2O + 4 H(+)(out). Subunits I and II form the functional core of the enzyme complex. Electrons originating in cytochrome c are transferred via heme a and Cu(A) to the binuclear center formed by heme a3 and Cu(B). The protein is Cytochrome c oxidase subunit 2 (ctaC) of Corynebacterium glutamicum (strain ATCC 13032 / DSM 20300 / JCM 1318 / BCRC 11384 / CCUG 27702 / LMG 3730 / NBRC 12168 / NCIMB 10025 / NRRL B-2784 / 534).